The sequence spans 235 residues: Triosephosphate isomerase (235 aa).

7-9 (NFK) is a substrate binding site. Catalysis depends on H92, which acts as the Electrophile. E161 functions as the Proton acceptor in the catalytic mechanism. Residues G167 and S197 each coordinate substrate.

This sequence belongs to the triosephosphate isomerase family. Homodimer.

Its subcellular location is the cytoplasm. It catalyses the reaction D-glyceraldehyde 3-phosphate = dihydroxyacetone phosphate. It participates in carbohydrate biosynthesis; gluconeogenesis. The protein operates within carbohydrate degradation; glycolysis; D-glyceraldehyde 3-phosphate from glycerone phosphate: step 1/1. Involved in the gluconeogenesis. Catalyzes stereospecifically the conversion of dihydroxyacetone phosphate (DHAP) to D-glyceraldehyde-3-phosphate (G3P). The polypeptide is Triosephosphate isomerase (Helicobacter hepaticus (strain ATCC 51449 / 3B1)).